Consider the following 423-residue polypeptide: G-protein coupled receptor 83 (423 aa).

The N-terminal stretch at 1-17 (MKVPPVLLLFLLSSVRA) is a signal peptide. Residues 18 to 71 (TEQPQVVTEHPSMEAALTGPNASSHFWANYTFSDWQNFVGRRRYGAESQNPTVK) are Extracellular-facing. N-linked (GlcNAc...) asparagine glycans are attached at residues asparagine 38 and asparagine 46. A helical transmembrane segment spans residues 72–92 (ALLIVAYSFTIVFSLFGNVLV). Residues 93–107 (CHVIFKNQRMHSATS) are Cytoplasmic-facing. Residues 108–129 (LFIVNLAVADIMITLLNTPFTL) traverse the membrane as a helical segment. Over 130–145 (VRFVNSTWVFGKGMCH) the chain is Extracellular. N-linked (GlcNAc...) asparagine glycosylation occurs at asparagine 134. The cysteines at positions 144 and 224 are disulfide-linked. The helical transmembrane segment at 146-167 (VSRFAQYCSLHVSALTLTAIAV) threads the bilayer. Residues 168-186 (DRHQVIMHPLKPRISITKG) lie on the Cytoplasmic side of the membrane. The chain crosses the membrane as a helical span at residues 187–208 (VIYIAVIWVMATFFSLPHAICQ). The Extracellular portion of the chain corresponds to 209 to 238 (KLFTFKYSEDIVRSLCLPDFPEPADLFWKY). A helical transmembrane segment spans residues 239-260 (LDLATFILLYLLPLFIISVAYA). The Cytoplasmic portion of the chain corresponds to 261–293 (RVAKKLWLCNTIGDVTTEQYLALRRKKKTTVKM). Residues 294 to 315 (LVLVVVLFALCWFPLNCYVLLL) traverse the membrane as a helical segment. The Extracellular segment spans residues 316-327 (SSKAIHTNNALY). Residues 328–348 (FAFHWFAMSSTCYNPFIYCWL) form a helical membrane-spanning segment. Residues 349 to 423 (NENFRVELKA…SSVEPVVAMS (75 aa)) lie on the Cytoplasmic side of the membrane. A disordered region spans residues 389-423 (SHGRRAPLPNHHLPSSQIQSGKTDLSSVEPVVAMS). The segment covering 401 to 414 (LPSSQIQSGKTDLS) has biased composition (polar residues).

This sequence belongs to the G-protein coupled receptor 1 family. Predominantly expressed in the brain, with moderate expression in the hypothalamus. Expressed in the thymus.

It is found in the cell membrane. Functionally, G-protein coupled receptor for PEN, a neuropeptide produced from the precursor protein, proSAAS (encoded by PCSK1N). Acts through a G(i)- and G(q)-alpha-alpha-mediated pathway in response to PEN. Plays a role in food intake and body weight regulation. May contribute to the regulation of anxiety-related behaviors. The polypeptide is G-protein coupled receptor 83 (Mus musculus (Mouse)).